A 930-amino-acid chain; its full sequence is Type I restriction enzyme SsaAORF53P endonuclease subunit (930 aa).

The Helicase ATP-binding domain maps to 254–418; the sequence is HQATETSNNG…DGRSTADIFG (165 aa). 268 to 274 contributes to the ATP binding site; sequence TTGSGKT.

Belongs to the HsdR family. The type I restriction/modification system is composed of three polypeptides R, M and S.

The catalysed reaction is Endonucleolytic cleavage of DNA to give random double-stranded fragments with terminal 5'-phosphates, ATP is simultaneously hydrolyzed.. In terms of biological role, the restriction (R) subunit of a type I restriction enzyme that recognizes an undetermined sequence and cleaves a random distance away. Subunit R is required for both nuclease and ATPase activities, but not for modification. After locating a non-methylated recognition site, the enzyme complex serves as a molecular motor that translocates DNA in an ATP-dependent manner until a collision occurs that triggers cleavage. The polypeptide is Type I restriction enzyme SsaAORF53P endonuclease subunit (Staphylococcus saprophyticus subsp. saprophyticus (strain ATCC 15305 / DSM 20229 / NCIMB 8711 / NCTC 7292 / S-41)).